The chain runs to 426 residues: tRNA methyltransferase 10 homolog C (426 aa).

A mitochondrion-targeting transit peptide spans 1 to 41 (MPVLLKMSVSITFLRPFARVLVPFTLHRKRRVLYSTIMQRY). The residue at position 86 (S86) is a Phosphoserine. The stretch at 138–166 (LYIKEKMKKARQIKKEMKKAEKEEPKKDQ) forms a coiled coil. Residues 193–385 (MGWKGAQAMQ…KFVPSRKHAG (193 aa)) form the SAM-dependent MTase TRM10-type domain.

This sequence belongs to the class IV-like SAM-binding methyltransferase superfamily. TRM10 family. Component of mitochondrial ribonuclease P, a complex composed of TRMT10C/MRPP1, HSD17B10/MRPP2 and PRORP/MRPP3. Interacts with HSD17B10/MRPP2; forming the MRPP1-MRPP2 subcomplex of the mitochondrial ribonuclease P complex. Interacts with GRSF1.

The protein resides in the mitochondrion matrix. Its subcellular location is the mitochondrion nucleoid. It catalyses the reaction adenosine(9) in tRNA + S-adenosyl-L-methionine = N(1)-methyladenosine(9) in tRNA + S-adenosyl-L-homocysteine + H(+). The catalysed reaction is guanosine(9) in tRNA + S-adenosyl-L-methionine = N(1)-methylguanosine(9) in tRNA + S-adenosyl-L-homocysteine + H(+). It carries out the reaction an adenosine in mRNA + S-adenosyl-L-methionine = an N(1)-methyladenosine in mRNA + S-adenosyl-L-homocysteine + H(+). In terms of biological role, mitochondrial tRNA N(1)-methyltransferase involved in mitochondrial tRNA maturation. Component of mitochondrial ribonuclease P, a complex composed of TRMT10C/MRPP1, HSD17B10/MRPP2 and PRORP/MRPP3, which cleaves tRNA molecules in their 5'-ends. Together with HSD17B10/MRPP2, forms a subcomplex of the mitochondrial ribonuclease P, named MRPP1-MRPP2 subcomplex, which displays functions that are independent of the ribonuclease P activity. The MRPP1-MRPP2 subcomplex catalyzes the formation of N(1)-methylguanine and N(1)-methyladenine at position 9 (m1G9 and m1A9, respectively) in tRNAs; TRMT10C/MRPP1 acting as the catalytic N(1)-methyltransferase subunit. The MRPP1-MRPP2 subcomplex also acts as a tRNA maturation platform: following 5'-end cleavage by the mitochondrial ribonuclease P complex, the MRPP1-MRPP2 subcomplex enhances the efficiency of 3'-processing catalyzed by ELAC2, retains the tRNA product after ELAC2 processing and presents the nascent tRNA to the mitochondrial CCA tRNA nucleotidyltransferase TRNT1 enzyme. In addition to tRNA N(1)-methyltransferase activity, TRMT10C/MRPP1 also acts as a mRNA N(1)-methyltransferase by mediating methylation of adenosine residues at the N(1) position of MT-ND5 mRNA. Associates with mitochondrial DNA complexes at the nucleoids to initiate RNA processing and ribosome assembly. The protein is tRNA methyltransferase 10 homolog C of Bos taurus (Bovine).